The following is a 519-amino-acid chain: Glucose-1-phosphate adenylyltransferase large subunit 2, chloroplastic/amyloplastic (519 aa).

The protein belongs to the bacterial/plant glucose-1-phosphate adenylyltransferase family. As to quaternary structure, heterotetramer. In terms of tissue distribution, leaves and tubers.

It localises to the plastid. Its subcellular location is the chloroplast. It is found in the amyloplast. The enzyme catalyses alpha-D-glucose 1-phosphate + ATP + H(+) = ADP-alpha-D-glucose + diphosphate. It functions in the pathway glycan biosynthesis; starch biosynthesis. Its activity is regulated as follows. Activated by 3'phosphoglycerate, inhibited by orthophosphate. Allosteric regulation. In terms of biological role, this protein plays a role in synthesis of starch. It catalyzes the synthesis of the activated glycosyl donor, ADP-glucose from Glc-1-P and ATP. The protein is Glucose-1-phosphate adenylyltransferase large subunit 2, chloroplastic/amyloplastic (AGPS2) of Solanum tuberosum (Potato).